We begin with the raw amino-acid sequence, 554 residues long: Phenylalanine--tRNA ligase beta subunit (554 aa).

The B5 domain maps to 276–351; sequence LTPKSRMISV…INYGYEKFEG (76 aa). Mg(2+) contacts are provided by D329, D335, E338, and E339.

Belongs to the phenylalanyl-tRNA synthetase beta subunit family. Type 2 subfamily. As to quaternary structure, tetramer of two alpha and two beta subunits. Mg(2+) is required as a cofactor.

It localises to the cytoplasm. The catalysed reaction is tRNA(Phe) + L-phenylalanine + ATP = L-phenylalanyl-tRNA(Phe) + AMP + diphosphate + H(+). The chain is Phenylalanine--tRNA ligase beta subunit from Methanococcus maripaludis (strain C6 / ATCC BAA-1332).